The primary structure comprises 157 residues: Crossover junction endodeoxyribonuclease RuvC (157 aa).

Active-site residues include aspartate 7, glutamate 66, and aspartate 139. Mg(2+) is bound by residues aspartate 7, glutamate 66, and aspartate 139.

It belongs to the RuvC family. In terms of assembly, homodimer which binds Holliday junction (HJ) DNA. The HJ becomes 2-fold symmetrical on binding to RuvC with unstacked arms; it has a different conformation from HJ DNA in complex with RuvA. In the full resolvosome a probable DNA-RuvA(4)-RuvB(12)-RuvC(2) complex forms which resolves the HJ. Requires Mg(2+) as cofactor.

The protein localises to the cytoplasm. The catalysed reaction is Endonucleolytic cleavage at a junction such as a reciprocal single-stranded crossover between two homologous DNA duplexes (Holliday junction).. Its function is as follows. The RuvA-RuvB-RuvC complex processes Holliday junction (HJ) DNA during genetic recombination and DNA repair. Endonuclease that resolves HJ intermediates. Cleaves cruciform DNA by making single-stranded nicks across the HJ at symmetrical positions within the homologous arms, yielding a 5'-phosphate and a 3'-hydroxyl group; requires a central core of homology in the junction. The consensus cleavage sequence is 5'-(A/T)TT(C/G)-3'. Cleavage occurs on the 3'-side of the TT dinucleotide at the point of strand exchange. HJ branch migration catalyzed by RuvA-RuvB allows RuvC to scan DNA until it finds its consensus sequence, where it cleaves and resolves the cruciform DNA. The sequence is that of Crossover junction endodeoxyribonuclease RuvC from Helicobacter pylori (strain Shi470).